The primary structure comprises 348 residues: Phosphate acyltransferase (348 aa).

This sequence belongs to the PlsX family. In terms of assembly, homodimer. Probably interacts with PlsY.

It localises to the cytoplasm. It carries out the reaction a fatty acyl-[ACP] + phosphate = an acyl phosphate + holo-[ACP]. It participates in lipid metabolism; phospholipid metabolism. Functionally, catalyzes the reversible formation of acyl-phosphate (acyl-PO(4)) from acyl-[acyl-carrier-protein] (acyl-ACP). This enzyme utilizes acyl-ACP as fatty acyl donor, but not acyl-CoA. The protein is Phosphate acyltransferase of Rhizobium rhizogenes (strain K84 / ATCC BAA-868) (Agrobacterium radiobacter).